A 101-amino-acid chain; its full sequence is UPF0235 protein MMP1055 (101 aa).

The protein belongs to the UPF0235 family.

This chain is UPF0235 protein MMP1055, found in Methanococcus maripaludis (strain DSM 14266 / JCM 13030 / NBRC 101832 / S2 / LL).